The sequence spans 232 residues: Ribonuclease 3 (232 aa).

An RNase III domain is found at 5–134 (QTVLKNHFAI…FLGALLLDKD (130 aa)). Glu47 is a Mg(2+) binding site. Asp51 is a catalytic residue. The Mg(2+) site is built by Asp120 and Glu123. Glu123 is a catalytic residue. The region spanning 160 to 229 (DYKTHLQELL…AKNAVEKGLD (70 aa)) is the DRBM domain.

It belongs to the ribonuclease III family. In terms of assembly, homodimer. Requires Mg(2+) as cofactor.

The protein resides in the cytoplasm. It catalyses the reaction Endonucleolytic cleavage to 5'-phosphomonoester.. Its function is as follows. Digests double-stranded RNA. Involved in the processing of primary rRNA transcript to yield the immediate precursors to the large and small rRNAs (23S and 16S). Processes some mRNAs, and tRNAs when they are encoded in the rRNA operon. Processes pre-crRNA and tracrRNA of type II CRISPR loci if present in the organism. This is Ribonuclease 3 from Streptococcus pneumoniae (strain Hungary19A-6).